A 171-amino-acid polypeptide reads, in one-letter code: MYRKALLVWLLVYGIMRCTVHSSPTALKYPALRLEDEVYDEDGNTLPDFAFDNNPIGIGNPASVFDDMYSFYYPAEKRHADDLLNKAYRNLLGQLSARKYLHTLMAKHLGAVSSSLEDDSEPLSKRHSDGIFTDSYSRYRKQMAVKKYLAAVLGKRYKQRIKNKGRRVAYL.

Positions 1 to 22 (MYRKALLVWLLVYGIMRCTVHS) are cleaved as a signal peptide. Residues 23 to 76 (SPTALKYPALRLEDEVYDEDGNTLPDFAFDNNPIGIGNPASVFDDMYSFYYPAE) constitute a propeptide that is removed on maturation. Positions 145-153 (VKKYLAAVL) are important for receptor binding. A Lysine amide modification is found at Lys-164. Positions 168–171 (VAYL) are excised as a propeptide.

This sequence belongs to the glucagon family.

Its subcellular location is the secreted. Primary role of GRF is to release GH from the pituitary. In terms of biological role, PACAP is a neuropeptide involved in diverse array of physiological processes through activating the PACAP subfamily of class B1 G protein-coupled receptors: VIP receptor 1 (VIPR1), VIP receptor 2 (VIPR2), and PACAP type I receptor (ADCYAP1R1). Exerts neuroprotective and general cytoprotective effects due to anti-apoptotic, anti-inflammatory, and antioxidant actions. This is Glucagon family neuropeptides (adcyap1) from Pelophylax ridibundus (Marsh frog).